A 193-amino-acid chain; its full sequence is MAIKLIVGLGNPGQEYMFTRHNAGFWFVHHLAQQFNIALAPDKKFHGVTGRGQIHGSDVRLLMPLTFMNKSGQSVVPMVKFYGIDNDELLIAHDELDIPAGSIKLKTDGGHGGHNGLRDITPHIGNDFHRLRVGIGHPGHKSKVSGHVLSKAAPDEQIAIDSALSAAFEALPLLLDGDIEKARSQINGFKLPE.

Y16 serves as a coordination point for tRNA. The Proton acceptor role is filled by H21. TRNA contacts are provided by F67, N69, and N115.

It belongs to the PTH family. Monomer.

The protein localises to the cytoplasm. The enzyme catalyses an N-acyl-L-alpha-aminoacyl-tRNA + H2O = an N-acyl-L-amino acid + a tRNA + H(+). Its function is as follows. Hydrolyzes ribosome-free peptidyl-tRNAs (with 1 or more amino acids incorporated), which drop off the ribosome during protein synthesis, or as a result of ribosome stalling. In terms of biological role, catalyzes the release of premature peptidyl moieties from peptidyl-tRNA molecules trapped in stalled 50S ribosomal subunits, and thus maintains levels of free tRNAs and 50S ribosomes. The polypeptide is Peptidyl-tRNA hydrolase (Psychrobacter arcticus (strain DSM 17307 / VKM B-2377 / 273-4)).